Reading from the N-terminus, the 125-residue chain is Nascent polypeptide-associated complex protein (125 aa).

The NAC-A/B domain occupies 9 to 76 (PRMMKQMQKM…SKNTSKTAEK (68 aa)).

It belongs to the NAC-alpha family. In terms of assembly, homodimer. Interacts with the ribosome. Binds ribosomal RNA.

In terms of biological role, contacts the emerging nascent chain on the ribosome. In Methanococcus vannielii (strain ATCC 35089 / DSM 1224 / JCM 13029 / OCM 148 / SB), this protein is Nascent polypeptide-associated complex protein.